Here is a 250-residue protein sequence, read N- to C-terminus: Pyrroloquinoline-quinone synthase (250 aa).

Belongs to the PqqC family.

The enzyme catalyses 6-(2-amino-2-carboxyethyl)-7,8-dioxo-1,2,3,4,7,8-hexahydroquinoline-2,4-dicarboxylate + 3 O2 = pyrroloquinoline quinone + 2 H2O2 + 2 H2O + H(+). Its pathway is cofactor biosynthesis; pyrroloquinoline quinone biosynthesis. In terms of biological role, ring cyclization and eight-electron oxidation of 3a-(2-amino-2-carboxyethyl)-4,5-dioxo-4,5,6,7,8,9-hexahydroquinoline-7,9-dicarboxylic-acid to PQQ. This Xanthomonas oryzae pv. oryzae (strain KACC10331 / KXO85) protein is Pyrroloquinoline-quinone synthase.